The sequence spans 758 residues: POU domain, class 2, transcription factor 1 (758 aa).

Composition is skewed to polar residues over residues 1–10 (MKLHSSSKIQ), 19–30 (RMNNPSETSKSP), and 275–285 (VQQLPQSQTTP). Disordered regions lie at residues 1 to 43 (MKLH…QTNG), 271 to 296 (AATP…LEEP), 377 to 398 (TNQS…RRKK), 450 to 472 (EKRI…LFSS), and 534 to 573 (SVLT…MTSS). In terms of domain architecture, POU-specific spans 294-368 (EEPSDLEELE…LLEKWLNDAE (75 aa)). Positions 395-454 (RRKKRTSIETNIRVALEKSFLENQKPTSEEITMIADQLNMEKEVIRVWFCNRRQKEKRIN) form a DNA-binding region, homeobox. Positions 455–472 (PPSSGGSSSSPIKSLFSS) are enriched in low complexity.

Belongs to the POU transcription factor family. Class-2 subfamily. In terms of tissue distribution, expressed in oocytes (at protein level). Expressed in the tadpole brain (at protein level).

It localises to the cytoplasm. The protein resides in the nucleus. In terms of biological role, transcription factor that binds to the octamer motif (5'-ATTTGCAT-3') and activates the promoters of the genes of some small nuclear RNAs (snRNA) and histone H2B. In vitro does not bind to variant octamer sequences, such as the H2B octamer 5'-GTTTGCAT-3', although binding has been observed in vivo during early embryogenesis, suggesting that interactions between pou2f1 and other factors might be required for octamer-dependent H2B transcription. Acts downstream of Notch signaling during radial glia formation. May be important for gastrulation, possibly through the regulation of an FGF-type signaling pathway. The sequence is that of POU domain, class 2, transcription factor 1 (pou2f1) from Xenopus laevis (African clawed frog).